Consider the following 503-residue polypeptide: MINIRPDEISSIIREQIEQYDQDVKVDNIGTVLQVGDGIARVYGLDQVMSGELLEFEDKTIGIALNLENDNVGVVLMGNGRQILEGSTVKTTGQIAQIPTGEAFLGRVVNPLGAPIDGKGDIANTETRLLEAMAPGIISRKSVCEPLQTGITSIDAMIPIGRGQRELIIGDRQTGKTAIAVDTIINQKTEDVVCVYVGVGQKASTVAQVVNVLEEKEAMAYTIIVCASANDPATLQYIAPYAGAALAEYFMYNGKATLVIYDDLTKQAMAYRQMSLLLRRPPGREAYPGDVFYLHSRLLERAAKLSDALGGGSMTALPVIETQASDVSAYIPTNVISITDGQIFLSNDLFNSGIRPAINVGISVSRVGSAAQTKAMKQVAGKLKLELAQFAELEAFSQFASDLDEATQKQLARGTRLREVLKQPQNSPLSVAEQVALIYTGINGFLDELEVASVKKYCASLLSFLNTSNNSYIGIVSSTNQFTAEAETALKEAISESKAVFMK.

Position 170 to 177 (170 to 177 (GDRQTGKT)) interacts with ATP.

It belongs to the ATPase alpha/beta chains family. As to quaternary structure, F-type ATPases have 2 components, CF(1) - the catalytic core - and CF(0) - the membrane proton channel. CF(1) has five subunits: alpha(3), beta(3), gamma(1), delta(1), epsilon(1). CF(0) has four main subunits: a, b, b' and c.

The protein resides in the plastid. Its subcellular location is the chloroplast thylakoid membrane. It catalyses the reaction ATP + H2O + 4 H(+)(in) = ADP + phosphate + 5 H(+)(out). Produces ATP from ADP in the presence of a proton gradient across the membrane. The alpha chain is a regulatory subunit. This is ATP synthase subunit alpha, chloroplastic from Trieres chinensis (Marine centric diatom).